A 49-amino-acid chain; its full sequence is Defensin Tm-AMP-D1.2 (49 aa).

Cystine bridges form between C3-C49, C14-C34, C20-C43, and C24-C45.

Plant defense peptide. This Triticum monococcum (Einkorn wheat) protein is Defensin Tm-AMP-D1.2.